Reading from the N-terminus, the 368-residue chain is RNA polymerase sigma factor SigA (368 aa).

Residues Thr16–Pro90 form a sigma-70 factor domain-1 region. Residues Leu69–Pro90 are disordered. Positions Asn71 to Asn83 are enriched in basic and acidic residues. Positions Leu135 to Thr205 are sigma-70 factor domain-2. The Interaction with polymerase core subunit RpoC motif lies at Asp159–Gln162. Residues Glu214–Ala291 are sigma-70 factor domain-3. The tract at residues Val303–His356 is sigma-70 factor domain-4. Positions Leu329–Ala348 form a DNA-binding region, H-T-H motif.

It belongs to the sigma-70 factor family. RpoD/SigA subfamily. In terms of assembly, interacts transiently with the RNA polymerase catalytic core formed by RpoA, RpoB, RpoC and RpoZ (2 alpha, 1 beta, 1 beta' and 1 omega subunit) to form the RNA polymerase holoenzyme that can initiate transcription. Interacts (via sigma-70 factor domain 4) with the phage G1 protein gp67; this inhibits rRNA synthesis. Interaction with phage G1 protein gp67 does not inhibit transcription in general, but selectively inhibits transcription from promoters that require interaction of the RNA polymerase alpha subunit with DNA sequences upstream of the -35 promoter element.

It localises to the cytoplasm. Sigma factors are initiation factors that promote the attachment of RNA polymerase to specific initiation sites and are then released. This sigma factor is the primary sigma factor during exponential growth. This chain is RNA polymerase sigma factor SigA, found in Staphylococcus aureus (strain NCTC 8325 / PS 47).